A 1056-amino-acid chain; its full sequence is Carbamoyl phosphate synthase large chain (1056 aa).

Positions 1-397 (MPKKSHIKKV…AFKKALRSLD (397 aa)) are carboxyphosphate synthetic domain. ATP contacts are provided by R127, R167, G173, G174, E206, V208, E213, G239, I240, H241, Q282, and E294. The ATP-grasp 1 domain maps to 131 to 323 (RDLMNAIGEP…IARVAAKIAI (193 aa)). The Mg(2+) site is built by Q282, E294, and N296. Residues Q282, E294, and N296 each contribute to the Mn(2+) site. The tract at residues 398 to 530 (NDMQQHTNPS…YSTWEEGCEL (133 aa)) is oligomerization domain. Residues 531–920 (VRDSAKKVLI…YKACTAADNT (390 aa)) are carbamoyl phosphate synthetic domain. The region spanning 662–853 (SRLLTRLEIP…LAKIAAKVMV (192 aa)) is the ATP-grasp 2 domain. ATP-binding residues include R698, S737, L739, E744, G769, V770, H771, S772, Q812, and E824. Positions 812, 824, and 826 each coordinate Mg(2+). Residues Q812, E824, and N826 each contribute to the Mn(2+) site. In terms of domain architecture, MGS-like spans 919 to 1056 (NTLPTTGNVF…EPLGHYHGLM (138 aa)). Positions 921–1056 (LPTTGNVFIS…EPLGHYHGLM (136 aa)) are allosteric domain.

It belongs to the CarB family. As to quaternary structure, composed of two chains; the small (or glutamine) chain promotes the hydrolysis of glutamine to ammonia, which is used by the large (or ammonia) chain to synthesize carbamoyl phosphate. Tetramer of heterodimers (alpha,beta)4. Mg(2+) serves as cofactor. Requires Mn(2+) as cofactor.

It carries out the reaction hydrogencarbonate + L-glutamine + 2 ATP + H2O = carbamoyl phosphate + L-glutamate + 2 ADP + phosphate + 2 H(+). It catalyses the reaction hydrogencarbonate + NH4(+) + 2 ATP = carbamoyl phosphate + 2 ADP + phosphate + 2 H(+). It participates in amino-acid biosynthesis; L-arginine biosynthesis; carbamoyl phosphate from bicarbonate: step 1/1. Its pathway is pyrimidine metabolism; UMP biosynthesis via de novo pathway; (S)-dihydroorotate from bicarbonate: step 1/3. In terms of biological role, large subunit of the glutamine-dependent carbamoyl phosphate synthetase (CPSase). CPSase catalyzes the formation of carbamoyl phosphate from the ammonia moiety of glutamine, carbonate, and phosphate donated by ATP, constituting the first step of 2 biosynthetic pathways, one leading to arginine and/or urea and the other to pyrimidine nucleotides. The large subunit (synthetase) binds the substrates ammonia (free or transferred from glutamine from the small subunit), hydrogencarbonate and ATP and carries out an ATP-coupled ligase reaction, activating hydrogencarbonate by forming carboxy phosphate which reacts with ammonia to form carbamoyl phosphate. The protein is Carbamoyl phosphate synthase large chain of Methanoculleus marisnigri (strain ATCC 35101 / DSM 1498 / JR1).